A 172-amino-acid polypeptide reads, in one-letter code: Co-chaperone protein HscB homolog (172 aa).

A J domain is found at 2–69; that stretch reads NHFELFNLPV…DSRAAYLLAL (68 aa).

Belongs to the HscB family. As to quaternary structure, interacts with HscA and stimulates its ATPase activity.

In terms of biological role, co-chaperone involved in the maturation of iron-sulfur cluster-containing proteins. Seems to help targeting proteins to be folded toward HscA. The polypeptide is Co-chaperone protein HscB homolog (Acinetobacter baumannii (strain SDF)).